The chain runs to 320 residues: Ribosomal large subunit pseudouridine synthase D (320 aa).

One can recognise an S4 RNA-binding domain in the interval 18–90 (QRLDQIAAQL…IELEIVYEDE (73 aa)). Residue Asp-138 is part of the active site.

It belongs to the pseudouridine synthase RluA family.

It is found in the cytoplasm. It catalyses the reaction uridine(1911/1915/1917) in 23S rRNA = pseudouridine(1911/1915/1917) in 23S rRNA. In terms of biological role, responsible for synthesis of pseudouridine from uracil at positions 1911, 1915 and 1917 in 23S ribosomal RNA. This chain is Ribosomal large subunit pseudouridine synthase D (rluD), found in Pseudomonas aeruginosa (strain ATCC 15692 / DSM 22644 / CIP 104116 / JCM 14847 / LMG 12228 / 1C / PRS 101 / PAO1).